The sequence spans 149 residues: Large ribosomal subunit protein bL9 (149 aa).

Belongs to the bacterial ribosomal protein bL9 family.

Binds to the 23S rRNA. This chain is Large ribosomal subunit protein bL9, found in Cutibacterium acnes (strain DSM 16379 / KPA171202) (Propionibacterium acnes).